The chain runs to 156 residues: uncharacterized protein (156 aa).

Transmembrane regions (helical) follow at residues 46–66 (GLVLWVMAGLGFALGDFAGVV) and 114–134 (IIDILLAWTSFLLIISGIVAL).

The protein localises to the cell membrane. This is an uncharacterized protein from Haemophilus influenzae (strain ATCC 51907 / DSM 11121 / KW20 / Rd).